We begin with the raw amino-acid sequence, 187 residues long: Threonylcarbamoyl-AMP synthase (187 aa).

The YrdC-like domain occupies 4-187; it reads TPDLDAAVAT…DARTGQILRD (184 aa).

This sequence belongs to the SUA5 family. TsaC subfamily.

It is found in the cytoplasm. It carries out the reaction L-threonine + hydrogencarbonate + ATP = L-threonylcarbamoyladenylate + diphosphate + H2O. In terms of biological role, required for the formation of a threonylcarbamoyl group on adenosine at position 37 (t(6)A37) in tRNAs that read codons beginning with adenine. Catalyzes the conversion of L-threonine, HCO(3)(-)/CO(2) and ATP to give threonylcarbamoyl-AMP (TC-AMP) as the acyladenylate intermediate, with the release of diphosphate. The sequence is that of Threonylcarbamoyl-AMP synthase from Xanthomonas campestris pv. campestris (strain 8004).